Consider the following 177-residue polypeptide: Large ribosomal subunit protein uL6 (177 aa).

This sequence belongs to the universal ribosomal protein uL6 family. Part of the 50S ribosomal subunit.

Functionally, this protein binds to the 23S rRNA, and is important in its secondary structure. It is located near the subunit interface in the base of the L7/L12 stalk, and near the tRNA binding site of the peptidyltransferase center. This Latilactobacillus sakei subsp. sakei (strain 23K) (Lactobacillus sakei subsp. sakei) protein is Large ribosomal subunit protein uL6.